Consider the following 295-residue polypeptide: Protein PHR1-LIKE 2 (295 aa).

Positions Thr38–Gln98 constitute an HTH myb-type domain. A DNA-binding region (H-T-H motif) is located at residues Pro69–Arg94. Positions Gly96–Tyr138 are disordered. Residues Ala99–Lys108 are compositionally biased toward basic and acidic residues. Polar residues predominate over residues Met127–Tyr138. The stretch at Thr141–Gln161 forms a coiled coil. Positions Leu154–Glu159 match the LHEQLE motif.

It belongs to the MYB-CC family. In terms of assembly, homo- and heterodimers. Interacts with PHL3, but not with PHR1.

It is found in the nucleus. Its function is as follows. Transcriptional activator. Acts redundantly with PHR1 as a key component of the central regulatory system controlling transcriptional responses to Pi starvation. Binds in a sequence-specific manner to phosphate starvation-regulated promoters. The chain is Protein PHR1-LIKE 2 from Arabidopsis thaliana (Mouse-ear cress).